Reading from the N-terminus, the 117-residue chain is cAMP-regulated phosphoprotein 19-B (117 aa).

The span at 1–37 (MSRDNQEIKAPEESSAEEQKEMDDKVTSPEKAEEIKL) shows a compositional bias: basic and acidic residues. The disordered stretch occupies residues 1–54 (MSRDNQEIKAPEESSAEEQKEMDDKVTSPEKAEEIKLKSRYPNIGPKPGGSDFL). Residue serine 28 is modified to Phosphoserine; by CDK2. Position 67 is a phosphoserine; by GWL (serine 67). Positions 77 to 117 (MKNKQLPTAAPDKTEVTGDHIPTPQDLPQRKPSLVASKLAG) are disordered. Threonine 99 carries the phosphothreonine; by CDK2 modification. Serine 109 carries the phosphoserine; by PKA modification.

The protein belongs to the endosulfine family. In terms of assembly, interacts (when phosphorylated at Ser-67) with ppp2r2d. Phosphorylation at Ser-67 by gwl during mitosis is essential for interaction with ppp2r2d (PR55-delta) and subsequent inactivation of PP2A.

The protein resides in the cytoplasm. Functionally, protein phosphatase inhibitor that specifically inhibits protein phosphatase 2A (PP2A) during mitosis. When phosphorylated at Ser-67 during mitosis, specifically interacts with ppp2r2d (PR55-delta) and inhibits its activity, leading to inactivation of PP2A, an essential condition to keep cyclin-B1-CDK1 activity high during M phase. This is cAMP-regulated phosphoprotein 19-B (arpp19-b) from Xenopus laevis (African clawed frog).